A 472-amino-acid chain; its full sequence is PEP-dependent dihydroxyacetone kinase, phosphoryl donor subunit DhaM (472 aa).

One can recognise a PTS EIIA type-4 domain in the interval 1–135 (MVNLVIVSHS…HALEAKREQL (135 aa)). Histidine 9 functions as the Tele-phosphohistidine intermediate in the catalytic mechanism. The HPr domain maps to 155 to 242 (ARSLAVVIKN…QLAEDNFGET (88 aa)). Histidine 169 functions as the Pros-phosphohistidine intermediate in the catalytic mechanism. The PTS EI-like, N-terminal part stretch occupies residues 264 to 472 (QPVLCTVQAK…VKTQRFNRQG (209 aa)). The active-site Tele-phosphohistidine intermediate is the histidine 430.

The protein belongs to the PEP-utilizing enzyme family. In terms of assembly, homodimer. The dihydroxyacetone kinase complex is composed of a homodimer of DhaM, a homodimer of DhaK and the subunit DhaL.

The catalysed reaction is dihydroxyacetone + phosphoenolpyruvate = dihydroxyacetone phosphate + pyruvate. It functions in the pathway polyol metabolism; glycerol degradation. In terms of biological role, component of the dihydroxyacetone kinase complex, which is responsible for the phosphoenolpyruvate (PEP)-dependent phosphorylation of dihydroxyacetone. DhaM serves as the phosphoryl donor. Is phosphorylated by phosphoenolpyruvate in an EI- and HPr-dependent reaction, and a phosphorelay system on histidine residues finally leads to phosphoryl transfer to DhaL and dihydroxyacetone. In Escherichia coli (strain K12), this protein is PEP-dependent dihydroxyacetone kinase, phosphoryl donor subunit DhaM.